The sequence spans 238 residues: Small ribosomal subunit protein uS2 (238 aa).

It belongs to the universal ribosomal protein uS2 family.

This chain is Small ribosomal subunit protein uS2, found in Synechococcus sp. (strain CC9311).